The primary structure comprises 119 residues: MKKINKQALIDLVEQKQLKAYVPEFSAGDEVNVAIKLKEKEKVRIQNFTGTVLRRRGKGISETFIVRKTTDGIPIEKNFQIHNPNISIELKRRGKVRRAYISYMRERSGKAAKIKERKQ.

The protein belongs to the bacterial ribosomal protein bL19 family.

This protein is located at the 30S-50S ribosomal subunit interface and may play a role in the structure and function of the aminoacyl-tRNA binding site. This Mycoplasma pneumoniae (strain ATCC 29342 / M129 / Subtype 1) (Mycoplasmoides pneumoniae) protein is Large ribosomal subunit protein bL19 (rplS).